A 214-amino-acid polypeptide reads, in one-letter code: 3-isopropylmalate dehydratase small subunit (214 aa).

The protein belongs to the LeuD family. LeuD type 1 subfamily. In terms of assembly, heterodimer of LeuC and LeuD.

It carries out the reaction (2R,3S)-3-isopropylmalate = (2S)-2-isopropylmalate. The protein operates within amino-acid biosynthesis; L-leucine biosynthesis; L-leucine from 3-methyl-2-oxobutanoate: step 2/4. Catalyzes the isomerization between 2-isopropylmalate and 3-isopropylmalate, via the formation of 2-isopropylmaleate. This chain is 3-isopropylmalate dehydratase small subunit, found in Desulforapulum autotrophicum (strain ATCC 43914 / DSM 3382 / VKM B-1955 / HRM2) (Desulfobacterium autotrophicum).